The primary structure comprises 118 residues: Beta-2-microglobulin (118 aa).

An N-terminal signal peptide occupies residues 1–20; it reads MAPLVALVLLGLLSLSGLDA. Positions 25-112 constitute an Ig-like C1-type domain; sequence PKVQVYSRHP…HVTLDKPKIV (88 aa). Cys-45 and Cys-99 are oxidised to a cystine.

This sequence belongs to the beta-2-microglobulin family. As to quaternary structure, heterodimer of an alpha chain and a beta chain. Beta-2-microglobulin is the beta-chain of major histocompatibility complex class I molecules.

Its subcellular location is the secreted. Functionally, component of the class I major histocompatibility complex (MHC). Involved in the presentation of peptide antigens to the immune system. The sequence is that of Beta-2-microglobulin (B2M) from Sus scrofa (Pig).